Consider the following 124-residue polypeptide: Small ribosomal subunit protein uS13 (124 aa).

Over residues 103–117 (KCNARTRKGPRKTVA) the composition is skewed to basic residues. Residues 103–124 (KCNARTRKGPRKTVANKKIETK) form a disordered region.

This sequence belongs to the universal ribosomal protein uS13 family. As to quaternary structure, part of the 30S ribosomal subunit. Forms a loose heterodimer with protein S19. Forms two bridges to the 50S subunit in the 70S ribosome.

Located at the top of the head of the 30S subunit, it contacts several helices of the 16S rRNA. In the 70S ribosome it contacts the 23S rRNA (bridge B1a) and protein L5 of the 50S subunit (bridge B1b), connecting the 2 subunits; these bridges are implicated in subunit movement. Contacts the tRNAs in the A and P-sites. This is Small ribosomal subunit protein uS13 from Malacoplasma penetrans (strain HF-2) (Mycoplasma penetrans).